The primary structure comprises 340 residues: Nod factor export ATP-binding protein I (340 aa).

Positions methionine 1–histidine 24 are enriched in basic and acidic residues. The disordered stretch occupies residues methionine 1–proline 34. A compositionally biased stretch (polar residues) spans glycine 25–proline 34. Residues valine 42–tyrosine 272 enclose the ABC transporter domain. Residue glycine 74–serine 81 participates in ATP binding.

The protein belongs to the ABC transporter superfamily. Lipooligosaccharide exporter (TC 3.A.1.102) family. In terms of assembly, the complex is composed of two ATP-binding proteins (NodI) and two transmembrane proteins (NodJ).

It localises to the cell inner membrane. Functionally, part of the ABC transporter complex NodIJ involved in the export of the nodulation factors (Nod factors), the bacterial signal molecules that induce symbiosis and subsequent nodulation induction. Nod factors are LCO (lipo-chitin oligosaccharide), a modified beta-1,4-linked N-acetylglucosamine oligosaccharide. This subunit is responsible for energy coupling to the transport system. The protein is Nod factor export ATP-binding protein I of Mesorhizobium japonicum (strain LMG 29417 / CECT 9101 / MAFF 303099) (Mesorhizobium loti (strain MAFF 303099)).